The following is a 241-amino-acid chain: Aquaporin Z 1 (241 aa).

A helical transmembrane segment spans residues 23 to 43 (AVFAAAFPELGIGFLGVAFAF). The NPA 1 motif lies at 63 to 65 (NPA). 3 helical membrane passes run 85 to 105 (IVAQ…ILTG), 129 to 149 (LLSA…VILG), and 156 to 176 (PVGF…LISI). The NPA 2 signature appears at 184-186 (NPA). Residues 204–224 (WLFWLAPILGGAIGAVVWKIF) form a helical membrane-spanning segment.

It belongs to the MIP/aquaporin (TC 1.A.8) family. As to quaternary structure, homotetramer.

Its subcellular location is the cell inner membrane. It catalyses the reaction H2O(in) = H2O(out). Channel that permits osmotically driven movement of water in both directions. It is involved in the osmoregulation and in the maintenance of cell turgor during volume expansion in rapidly growing cells. It mediates rapid entry or exit of water in response to abrupt changes in osmolarity. This Agrobacterium fabrum (strain C58 / ATCC 33970) (Agrobacterium tumefaciens (strain C58)) protein is Aquaporin Z 1.